Here is a 129-residue protein sequence, read N- to C-terminus: Small ribosomal subunit protein uS9 (129 aa).

The protein belongs to the universal ribosomal protein uS9 family.

The protein is Small ribosomal subunit protein uS9 of Nitratiruptor sp. (strain SB155-2).